Here is a 58-residue protein sequence, read N- to C-terminus: Large ribosomal subunit protein bL32 (58 aa).

Positions 1 to 15 are enriched in basic residues; the sequence is MAVPKKKTSKAKRNQ. Positions 1 to 23 are disordered; sequence MAVPKKKTSKAKRNQRSATWKGK.

This sequence belongs to the bacterial ribosomal protein bL32 family.

The polypeptide is Large ribosomal subunit protein bL32 (Parasynechococcus marenigrum (strain WH8102)).